The chain runs to 333 residues: Ketol-acid reductoisomerase (NADP(+)) (333 aa).

In terms of domain architecture, KARI N-terminal Rossmann spans 1–179 (MFYDDNADLS…GGTRAGVIKT (179 aa)). NADP(+)-binding positions include 22-25 (YGSQ), serine 48, serine 50, and 80-83 (DTAQ). Histidine 105 is an active-site residue. An NADP(+)-binding site is contributed by glycine 131. A KARI C-terminal knotted domain is found at 180-325 (TFKDETETDL…KKLRDLMSWV (146 aa)). Mg(2+) is bound by residues aspartate 188, glutamate 192, glutamate 224, and glutamate 228. Serine 249 provides a ligand contact to substrate.

This sequence belongs to the ketol-acid reductoisomerase family. Mg(2+) serves as cofactor.

It carries out the reaction (2R)-2,3-dihydroxy-3-methylbutanoate + NADP(+) = (2S)-2-acetolactate + NADPH + H(+). The enzyme catalyses (2R,3R)-2,3-dihydroxy-3-methylpentanoate + NADP(+) = (S)-2-ethyl-2-hydroxy-3-oxobutanoate + NADPH + H(+). It participates in amino-acid biosynthesis; L-isoleucine biosynthesis; L-isoleucine from 2-oxobutanoate: step 2/4. The protein operates within amino-acid biosynthesis; L-valine biosynthesis; L-valine from pyruvate: step 2/4. In terms of biological role, involved in the biosynthesis of branched-chain amino acids (BCAA). Catalyzes an alkyl-migration followed by a ketol-acid reduction of (S)-2-acetolactate (S2AL) to yield (R)-2,3-dihydroxy-isovalerate. In the isomerase reaction, S2AL is rearranged via a Mg-dependent methyl migration to produce 3-hydroxy-3-methyl-2-ketobutyrate (HMKB). In the reductase reaction, this 2-ketoacid undergoes a metal-dependent reduction by NADPH to yield (R)-2,3-dihydroxy-isovalerate. The sequence is that of Ketol-acid reductoisomerase (NADP(+)) from Mycobacterium leprae (strain TN).